A 261-amino-acid polypeptide reads, in one-letter code: Small ribosomal subunit protein mS23 (261 aa).

Positions 233 to 261 (RASSPSASWTNETEEEQKPIDQDVEEIQL) are disordered.

This sequence belongs to the mitochondrion-specific ribosomal protein mS23 family. As to quaternary structure, component of the mitochondrial small ribosomal subunit.

Its subcellular location is the mitochondrion. The sequence is that of Small ribosomal subunit protein mS23 (RSM25) from Kluyveromyces lactis (strain ATCC 8585 / CBS 2359 / DSM 70799 / NBRC 1267 / NRRL Y-1140 / WM37) (Yeast).